The following is a 101-amino-acid chain: Protein Tat (101 aa).

Residues 1–24 (MEPVDPNLEPWKHPGSQPRTACNN) form an interaction with human CREBBP region. A transactivation region spans residues 1–48 (MEPVDPNLEPWKHPGSQPRTACNNCYCKKCCFHCQVCFTKKGLGISYG). Cys-22, Cys-25, and Cys-27 together coordinate Zn(2+). A cysteine-rich region spans residues 22–37 (CNNCYCKKCCFHCQVC). Residue Lys-28 is modified to N6-acetyllysine; by host PCAF. Zn(2+)-binding residues include Cys-30, His-33, Cys-34, and Cys-37. The core stretch occupies residues 38–48 (FTKKGLGISYG). Positions 47–101 (YGRKKRRQRRRPPQDSQTHQSSLSKQPTSQLRGDPTGPTESKKKVERETETDPVH) are disordered. The span at 48–57 (GRKKRRQRRR) shows a compositional bias: basic residues. The Nuclear localization signal, RNA-binding (TAR), and protein transduction motif lies at 49 to 57 (RKKRRQRRR). An interaction with the host capping enzyme RNGTT region spans residues 49–86 (RKKRRQRRRPPQDSQTHQSSLSKQPTSQLRGDPTGPTE). N6-acetyllysine; by host EP300 and GCN5L2 occurs at positions 50 and 51. Residues Arg-52 and Arg-53 each carry the asymmetric dimethylarginine; by host PRMT6 modification. Residues 61-77 (DSQTHQSSLSKQPTSQL) are compositionally biased toward polar residues. Residue Lys-71 forms a Glycyl lysine isopeptide (Lys-Gly) (interchain with G-Cter in ubiquitin) linkage. The Cell attachment site signature appears at 78–80 (RGD). A compositionally biased stretch (basic and acidic residues) spans 86 to 101 (ESKKKVERETETDPVH).

The protein belongs to the lentiviruses Tat family. In terms of assembly, interacts with host CCNT1. Associates with the P-TEFb complex composed at least of Tat, P-TEFb (CDK9 and CCNT1), TAR RNA, RNA Pol II. Recruits the HATs CREBBP, TAF1/TFIID, EP300, PCAF and GCN5L2. Interacts with host KAT5/Tip60; this interaction targets the latter to degradation. Interacts with the host deacetylase SIRT1. Interacts with host capping enzyme RNGTT; this interaction stimulates RNGTT. Binds to host KDR, and to the host integrins ITGAV/ITGB3 and ITGA5/ITGB1. Interacts with host KPNB1/importin beta-1 without previous binding to KPNA1/importin alpha-1. Interacts with EIF2AK2. Interacts with host nucleosome assembly protein NAP1L1; this interaction may be required for the transport of Tat within the nucleus, since the two proteins interact at the nuclear rim. Interacts with host C1QBP/SF2P32; this interaction involves lysine-acetylated Tat. Interacts with the host chemokine receptors CCR2, CCR3 and CXCR4. Interacts with host DPP4/CD26; this interaction may trigger an anti-proliferative effect. Interacts with host LDLR. Interacts with the host extracellular matrix metalloproteinase MMP1. Interacts with host PRMT6; this interaction mediates Tat's methylation. Interacts with, and is ubiquitinated by MDM2/Hdm2. Interacts with host PSMC3 and HTATIP2. Interacts with STAB1; this interaction may overcome SATB1-mediated repression of IL2 and IL2RA (interleukin) in T cells by binding to the same domain than HDAC1. Interacts (when acetylated) with human CDK13, thereby increasing HIV-1 mRNA splicing and promoting the production of the doubly spliced HIV-1 protein Nef. Interacts with host TBP; this interaction modulates the activity of transcriptional pre-initiation complex. Interacts with host RELA. Interacts with host PLSCR1; this interaction negatively regulates Tat transactivation activity by altering its subcellular distribution. Asymmetrical arginine methylation by host PRMT6 seems to diminish the transactivation capacity of Tat and affects the interaction with host CCNT1. Post-translationally, acetylation by EP300, CREBBP, GCN5L2/GCN5 and PCAF regulates the transactivation activity of Tat. EP300-mediated acetylation of Lys-50 promotes dissociation of Tat from the TAR RNA through the competitive binding to PCAF's bromodomain. In addition, the non-acetylated Tat's N-terminus can also interact with PCAF. PCAF-mediated acetylation of Lys-28 enhances Tat's binding to CCNT1. Lys-50 is deacetylated by SIRT1. In terms of processing, polyubiquitination by host MDM2 does not target Tat to degradation, but activates its transactivation function and fosters interaction with CCNT1 and TAR RNA. Phosphorylated by EIF2AK2 on serine and threonine residues adjacent to the basic region important for TAR RNA binding and function. Phosphorylation of Tat by EIF2AK2 is dependent on the prior activation of EIF2AK2 by dsRNA.

The protein localises to the host nucleus. It is found in the host nucleolus. Its subcellular location is the host cytoplasm. It localises to the secreted. Its function is as follows. Transcriptional activator that increases RNA Pol II processivity, thereby increasing the level of full-length viral transcripts. Recognizes a hairpin structure at the 5'-LTR of the nascent viral mRNAs referred to as the transactivation responsive RNA element (TAR) and recruits the cyclin T1-CDK9 complex (P-TEFb complex) that will in turn hyperphosphorylate the RNA polymerase II to allow efficient elongation. The CDK9 component of P-TEFb and other Tat-activated kinases hyperphosphorylate the C-terminus of RNA Pol II that becomes stabilized and much more processive. Other factors such as HTATSF1/Tat-SF1, SUPT5H/SPT5, and HTATIP2 are also important for Tat's function. Besides its effect on RNA Pol II processivity, Tat induces chromatin remodeling of proviral genes by recruiting the histone acetyltransferases (HATs) CREBBP, EP300 and PCAF to the chromatin. This also contributes to the increase in proviral transcription rate, especially when the provirus integrates in transcriptionally silent region of the host genome. To ensure maximal activation of the LTR, Tat mediates nuclear translocation of NF-kappa-B by interacting with host RELA. Through its interaction with host TBP, Tat may also modulate transcription initiation. Tat can reactivate a latently infected cell by penetrating in it and transactivating its LTR promoter. In the cytoplasm, Tat is thought to act as a translational activator of HIV-1 mRNAs. In terms of biological role, extracellular circulating Tat can be endocytosed by surrounding uninfected cells via the binding to several surface receptors such as CD26, CXCR4, heparan sulfate proteoglycans (HSPG) or LDLR. Neurons are rarely infected, but they internalize Tat via their LDLR. Through its interaction with nuclear HATs, Tat is potentially able to control the acetylation-dependent cellular gene expression. Modulates the expression of many cellular genes involved in cell survival, proliferation or in coding for cytokines or cytokine receptors. Tat plays a role in T-cell and neurons apoptosis. Tat induced neurotoxicity and apoptosis probably contribute to neuroAIDS. Circulating Tat also acts as a chemokine-like and/or growth factor-like molecule that binds to specific receptors on the surface of the cells, affecting many cellular pathways. In the vascular system, Tat binds to ITGAV/ITGB3 and ITGA5/ITGB1 integrins dimers at the surface of endothelial cells and competes with bFGF for heparin-binding sites, leading to an excess of soluble bFGF. This chain is Protein Tat, found in Human immunodeficiency virus type 1 group M subtype B (isolate YU-2) (HIV-1).